The following is a 66-amino-acid chain: Large ribosomal subunit protein bL33c (66 aa).

Belongs to the bacterial ribosomal protein bL33 family.

The protein localises to the plastid. Its subcellular location is the chloroplast. This chain is Large ribosomal subunit protein bL33c, found in Oenothera argillicola (Appalachian evening primrose).